We begin with the raw amino-acid sequence, 642 residues long: Influenza virus NS1A-binding protein homolog (642 aa).

The BTB domain occupies 32-99; that stretch reads CDVRLQVCGH…AYTAQLKADK (68 aa). Residues 134–233 form the BACK domain; that stretch reads CISYRNFASC…YYSADHKLLD (100 aa). A phosphoserine mark is found at Ser-246, Ser-277, Ser-322, Ser-336, and Ser-338. Residues 257–281 are disordered; it reads KPPRENGHKQISGSSTGCLSSPNAS. Over residues 265-281 the composition is skewed to polar residues; it reads KQISGSSTGCLSSPNAS. Kelch repeat units follow at residues 369–415, 416–463, 465–512, 513–559, 561–606, and 608–642; these read KLIA…VLMG, QLYV…ALNG, LYIV…ELGG, YLYI…VLDG, LFVG…TVGN, and IYAV…IFQF.

Belongs to the BTB-kelch protein family. Homodimer; through the BTB domain. Interacts with AHR/Aryl hydrocarbon receptor. Interacts (via BACK domain) with pre-mRNA-binding protein HNRNPK; the interaction is direct. Interacts (via BACK domain) with splicing factor PTBP1; the interaction is direct. Interacts (via Kelch repeats) with RNA polymerase POLR2A (via C-terminal domain). Interacts (via BACK domain) with splicing factor SNRPA; the interaction is indirect. Interacts (via Kelch repeats) with splicing factor SART1. Interacts (via BACK domain) with ALYREF; the interaction is indirect and likely plays a role in mRNA nuclear export. Interacts (via Kelch repeats) with KLHL20 (via Kelch repeats); this interaction blocks the assembly of Cul3-KLHL20 complex. Ubiquitous expression. In the heart, the highest expression is detected in the ventricles and the lowest in the atria. Expressed in dendrites and spines in neurons.

It is found in the cytoplasm. It localises to the cytoskeleton. Its subcellular location is the nucleus. In terms of biological role, involved in many cell functions, including pre-mRNA splicing, the aryl hydrocarbon receptor (AHR) pathway, F-actin organization and protein ubiquitination. Plays a role in the dynamic organization of the actin skeleton as a stabilizer of actin filaments by association with F-actin through Kelch repeats. Protects cells from cell death induced by actin destabilization. Functions as a modifier of the AHR/Aryl hydrocarbon receptor pathway increasing the concentration of AHR available to activate transcription. In addition, functions as a negative regulator of BCR(KLHL20) E3 ubiquitin ligase complex to prevent ubiquitin-mediated proteolysis of PML and DAPK1, two tumor suppressors. Inhibits pre-mRNA splicing (in vitro). May play a role in mRNA nuclear export. Its function is as follows. May play a role in cell cycle progression in the nucleus. This is Influenza virus NS1A-binding protein homolog from Mus musculus (Mouse).